The primary structure comprises 241 residues: Ribonuclease PH (241 aa).

Residues R87 and 125 to 127 (GTR) contribute to the phosphate site.

The protein belongs to the RNase PH family. In terms of assembly, homohexameric ring arranged as a trimer of dimers.

It carries out the reaction tRNA(n+1) + phosphate = tRNA(n) + a ribonucleoside 5'-diphosphate. Phosphorolytic 3'-5' exoribonuclease that plays an important role in tRNA 3'-end maturation. Removes nucleotide residues following the 3'-CCA terminus of tRNAs; can also add nucleotides to the ends of RNA molecules by using nucleoside diphosphates as substrates, but this may not be physiologically important. Probably plays a role in initiation of 16S rRNA degradation (leading to ribosome degradation) during starvation. This is Ribonuclease PH from Dehalococcoides mccartyi (strain ATCC BAA-2100 / JCM 16839 / KCTC 5957 / BAV1).